Reading from the N-terminus, the 391-residue chain is NADH-quinone oxidoreductase subunit D (391 aa).

It belongs to the complex I 49 kDa subunit family. As to quaternary structure, NDH-1 is composed of 14 different subunits. Subunits NuoB, C, D, E, F, and G constitute the peripheral sector of the complex.

It localises to the cell inner membrane. It catalyses the reaction a quinone + NADH + 5 H(+)(in) = a quinol + NAD(+) + 4 H(+)(out). Functionally, NDH-1 shuttles electrons from NADH, via FMN and iron-sulfur (Fe-S) centers, to quinones in the respiratory chain. The immediate electron acceptor for the enzyme in this species is believed to be ubiquinone. Couples the redox reaction to proton translocation (for every two electrons transferred, four hydrogen ions are translocated across the cytoplasmic membrane), and thus conserves the redox energy in a proton gradient. This is NADH-quinone oxidoreductase subunit D from Rickettsia akari (strain Hartford).